The primary structure comprises 608 residues: Glutamine--fructose-6-phosphate aminotransferase [isomerizing] (608 aa).

Residue cysteine 2 is the Nucleophile; for GATase activity of the active site. One can recognise a Glutamine amidotransferase type-2 domain in the interval 2-217 (CGIVGYSGKK…DKEFVVLTSE (216 aa)). SIS domains follow at residues 285-424 (TKEQ…NKNT) and 453-598 (KVQK…VDKP). Lysine 603 functions as the For Fru-6P isomerization activity in the catalytic mechanism.

Homodimer.

The protein resides in the cytoplasm. It catalyses the reaction D-fructose 6-phosphate + L-glutamine = D-glucosamine 6-phosphate + L-glutamate. In terms of biological role, catalyzes the first step in hexosamine metabolism, converting fructose-6P into glucosamine-6P using glutamine as a nitrogen source. In Clostridium acetobutylicum (strain ATCC 824 / DSM 792 / JCM 1419 / IAM 19013 / LMG 5710 / NBRC 13948 / NRRL B-527 / VKM B-1787 / 2291 / W), this protein is Glutamine--fructose-6-phosphate aminotransferase [isomerizing].